Reading from the N-terminus, the 92-residue chain is Small ribosomal subunit protein uS19 (92 aa).

Positions 73–92 (EFSPTRSFRGHAGAKNKGRK) are disordered. The segment covering 80-92 (FRGHAGAKNKGRK) has biased composition (basic residues).

This sequence belongs to the universal ribosomal protein uS19 family.

Protein S19 forms a complex with S13 that binds strongly to the 16S ribosomal RNA. This chain is Small ribosomal subunit protein uS19, found in Christiangramia forsetii (strain DSM 17595 / CGMCC 1.15422 / KT0803) (Gramella forsetii).